A 141-amino-acid chain; its full sequence is Large ribosomal subunit protein uL11 (141 aa).

Belongs to the universal ribosomal protein uL11 family. Part of the ribosomal stalk of the 50S ribosomal subunit. Interacts with L10 and the large rRNA to form the base of the stalk. L10 forms an elongated spine to which L12 dimers bind in a sequential fashion forming a multimeric L10(L12)X complex. One or more lysine residues are methylated.

Its function is as follows. Forms part of the ribosomal stalk which helps the ribosome interact with GTP-bound translation factors. This is Large ribosomal subunit protein uL11 from Latilactobacillus sakei subsp. sakei (strain 23K) (Lactobacillus sakei subsp. sakei).